Consider the following 206-residue polypeptide: uncharacterized protein (206 aa).

Residues 147-206 form a disordered region; it reads REEKAQKSKSKSRNQDERGSPLDERLGPKVSDLTLMERIFQVRRKPRKSRRDRRSRVSKR. Over residues 159–173 the composition is skewed to basic and acidic residues; the sequence is RNQDERGSPLDERLG. Residues 187-206 are compositionally biased toward basic residues; it reads QVRRKPRKSRRDRRSRVSKR.

This is an uncharacterized protein from Schizosaccharomyces pombe (strain 972 / ATCC 24843) (Fission yeast).